A 199-amino-acid chain; its full sequence is Glycerol-3-phosphate acyltransferase (199 aa).

The next 5 helical transmembrane spans lie at 5-25 (AFLV…VALV), 51-71 (KLGV…VLCA), 79-99 (VFLS…VFLY), 112-132 (VFLG…VAVI), and 153-173 (CAWL…GLVI).

The protein belongs to the PlsY family. Probably interacts with PlsX.

The protein localises to the cell inner membrane. The enzyme catalyses an acyl phosphate + sn-glycerol 3-phosphate = a 1-acyl-sn-glycero-3-phosphate + phosphate. It participates in lipid metabolism; phospholipid metabolism. In terms of biological role, catalyzes the transfer of an acyl group from acyl-phosphate (acyl-PO(4)) to glycerol-3-phosphate (G3P) to form lysophosphatidic acid (LPA). This enzyme utilizes acyl-phosphate as fatty acyl donor, but not acyl-CoA or acyl-ACP. The polypeptide is Glycerol-3-phosphate acyltransferase (Solidesulfovibrio magneticus (strain ATCC 700980 / DSM 13731 / RS-1) (Desulfovibrio magneticus)).